Consider the following 170-residue polypeptide: Lipoprotein signal peptidase (170 aa).

A run of 3 helical transmembrane segments spans residues 12–32 (WYWV…WVLA), 67–87 (WQRW…TVWL), and 93–113 (SLLK…GNLV). Catalysis depends on residues aspartate 123 and aspartate 141. The helical transmembrane segment at 137 to 157 (FNIADSAIFIGAVLIIWDSFF) threads the bilayer.

It belongs to the peptidase A8 family.

It is found in the cell inner membrane. The enzyme catalyses Release of signal peptides from bacterial membrane prolipoproteins. Hydrolyzes -Xaa-Yaa-Zaa-|-(S,diacylglyceryl)Cys-, in which Xaa is hydrophobic (preferably Leu), and Yaa (Ala or Ser) and Zaa (Gly or Ala) have small, neutral side chains.. Its pathway is protein modification; lipoprotein biosynthesis (signal peptide cleavage). Its function is as follows. This protein specifically catalyzes the removal of signal peptides from prolipoproteins. The chain is Lipoprotein signal peptidase from Shewanella oneidensis (strain ATCC 700550 / JCM 31522 / CIP 106686 / LMG 19005 / NCIMB 14063 / MR-1).